Reading from the N-terminus, the 549-residue chain is Cation/acetate symporter ActP (549 aa).

Helical transmembrane passes span 33–53 (WQAIVMFLIFVVFTLGITYWA), 77–97 (LAIAGDYMSAASFLGISALVF), 103–123 (GLIYSLGFLVGWPIILFLIAE), 148–168 (ILSACGSLVVVALYLIAQMVG), 183–203 (IAVVLVGVLMMMYVLFGGMLA), 206–226 (WVQIIKAVLLLFGASFMAFMV), 262–282 (ISALSLGLGLMFGTAGLPHIL), 303–323 (GFMGYFYILTFIIGFGAIMLV), 355–375 (LFLGFISAVAFATILAVVAGL), 404–424 (VSKITVLVLGVIAIILGVLFE), 428–448 (IAFMVGLAFAIAASCNFPIIL), 464–484 (GGWLGLVTAVVLMVLGPTIWV), and 493–513 (IFPYEYPALFSISVAFIGIWF).

The protein belongs to the sodium:solute symporter (SSF) (TC 2.A.21) family.

It is found in the cell inner membrane. Transports acetate. In Citrobacter koseri (strain ATCC BAA-895 / CDC 4225-83 / SGSC4696), this protein is Cation/acetate symporter ActP.